Reading from the N-terminus, the 705-residue chain is Dolichyl-diphosphooligosaccharide--protein glycosyltransferase subunit STT3A (705 aa).

Topologically, residues 1-15 are cytoplasmic; it reads MTKLGFLRLSYEKQD. A helical membrane pass occupies residues 16–34; the sequence is TLLKLLILSMAAVLSFSTR. The Lumenal segment spans residues 35 to 111; the sequence is LFAVLRFESV…VLHFFHITID (77 aa). Positions 47–49 match the DXD motif 1 motif; sequence EFD. A Mn(2+)-binding site is contributed by aspartate 49. A helical membrane pass occupies residues 112–141; sequence IRNVCVFLAPLFSSFTTIVTYHLTKELKDA. A topological domain (cytoplasmic) is located at residue glycine 142. A helical transmembrane segment spans residues 143 to 158; sequence AGLLAAAMIAVVPGYI. The Lumenal portion of the chain corresponds to 159 to 170; that stretch reads SRSVAGSYDNEG. Aspartate 167 and glutamate 169 together coordinate Mn(2+). Positions 167–169 match the DXD motif 2 motif; that stretch reads DNE. The helical transmembrane segment at 171-188 threads the bilayer; that stretch reads IAIFCMLLTYYMWIKAVK. Over 189 to 191 the chain is Cytoplasmic; sequence TGS. A helical transmembrane segment spans residues 192–207; that stretch reads IYWAAKCALAYFYMVS. Over 208 to 210 the chain is Lumenal; the sequence is SWG. The chain crosses the membrane as a helical span at residues 211–229; sequence GYVFLINLIPLHVLVLMLT. Topologically, residues 230–234 are cytoplasmic; the sequence is GRFSH. A helical membrane pass occupies residues 235–253; the sequence is RIYVAYCTVYCLGTILSMQ. At 254–265 the chain is on the lumenal side; the sequence is ISFVGFQPVLSS. A helical transmembrane segment spans residues 266–283; the sequence is EHMAAFGVFGLCQIHAFV. Topologically, residues 284-298 are cytoplasmic; sequence DYLRSKLNPQQFEVL. The helical transmembrane segment at 299–317 threads the bilayer; that stretch reads FRSVISLVGFVLLTVGALL. Residues 318–356 lie on the Lumenal side of the membrane; it reads MLTGKISPWTGRFYSLLDPSYAKNNIPIIASVSEHQPTT. An SVSE motif motif is present at residues 348–351; it reads SVSE. The chain crosses the membrane as a helical span at residues 357 to 379; that stretch reads WSSYYFDLQLLVFMFPVGLYYCF. The Cytoplasmic portion of the chain corresponds to 380-385; that stretch reads SNLSDA. A helical membrane pass occupies residues 386-402; that stretch reads RIFIIMYGVTSMYFSAV. The Lumenal segment spans residues 403–406; sequence MVRL. A dolichyl diphosphooligosaccharide-binding site is contributed by arginine 405. Residues 407–428 form a helical membrane-spanning segment; it reads MLVLAPVMCILSGIGVSQVLST. Residues 429 to 453 are Cytoplasmic-facing; that stretch reads YMKNLDISRPDKKSKKQQDSTYPIK. Residues 454–473 form a helical membrane-spanning segment; it reads NEVASGMILVMAFFLITYTF. Topologically, residues 474-705 are lumenal; that stretch reads HSTWVTSEAY…DLDNRGLSRT (232 aa). The tract at residues 525-527 is interacts with target acceptor peptide in protein substrate; the sequence is WWD. The WWDYG motif motif lies at 525-529; sequence WWDYG. Tyrosine 530 lines the dolichyl diphosphooligosaccharide pocket. Asparagine 537 and asparagine 544 each carry an N-linked (GlcNAc...) asparagine glycan. The N-linked (GlcNAc...) (high mannose) asparagine glycan is linked to asparagine 548. Positions 592 to 599 match the DK motif motif; the sequence is DINKFLWM.

It belongs to the STT3 family. As to quaternary structure, component of the oligosaccharyltransferase (OST) complex. There are 2 OST complexes, OST-A and OST-B, which contain STT3A or STT3B as catalytic subunit, respectively. OST-A and OST-B contain common core subunits RPN1, RPN2, OST48, OST4, DAD1 and TMEM258, and OST-A contains DC2/OSTC and KRTCAP2/KCP2 specific accessory subunits. OST-A complex assembly occurs through the formation of 3 subcomplexes. Subcomplex 1 contains RPN1 and TMEM258, subcomplex 2 contains the OST-A-specific subunits STT3A, DC2/OSTC, and KCP2 as well as the core subunit OST4, and subcomplex 3 contains RPN2, DAD1, and OST48. The OST-A complex can form stable complexes with the Sec61 complex or with both the Sec61 and TRAP complexes. Mg(2+) serves as cofactor. The cofactor is Mn(2+).

Its subcellular location is the endoplasmic reticulum membrane. The catalysed reaction is a di-trans,poly-cis-dolichyl diphosphooligosaccharide + L-asparaginyl-[protein] = N(4)-(oligosaccharide-(1-&gt;4)-N-acetyl-beta-D-glucosaminyl-(1-&gt;4)-N-acetyl-beta-D-glucosaminyl)-L-asparaginyl-[protein] + a di-trans,poly-cis-dolichyl diphosphate + H(+). The protein operates within protein modification; protein glycosylation. Catalytic subunit of the oligosaccharyl transferase (OST) complex that catalyzes the initial transfer of a defined glycan (Glc(3)Man(9)GlcNAc(2) in eukaryotes) from the lipid carrier dolichol-pyrophosphate to an asparagine residue within an Asn-X-Ser/Thr consensus motif in nascent polypeptide chains, the first step in protein N-glycosylation. N-glycosylation occurs cotranslationally and the complex associates with the Sec61 complex at the channel-forming translocon complex that mediates protein translocation across the endoplasmic reticulum (ER). All subunits are required for a maximal enzyme activity. This subunit contains the active site and the acceptor peptide and donor lipid-linked oligosaccharide (LLO) binding pockets. STT3A is present in the majority of OST complexes and mediates cotranslational N-glycosylation of most sites on target proteins, while STT3B-containing complexes are required for efficient post-translational glycosylation and mediate glycosylation of sites that have been skipped by STT3A. STT3A-containing OST-A complex is also required to prevent hyperglycosylation of some target proteins by preventing glycosylation of facultative sites before folding of target proteins is completed. The sequence is that of Dolichyl-diphosphooligosaccharide--protein glycosyltransferase subunit STT3A from Canis lupus familiaris (Dog).